We begin with the raw amino-acid sequence, 202 residues long: Ras-related protein Rab-18 (202 aa).

The GTP site is built by Ser-20, Gly-23, Lys-24, Ser-25, Ser-26, Asp-37, Pro-38, Thr-43, Gly-69, Lys-126, Asp-128, and Ala-155. The short motif at 40–48 (QAATIGVDF) is the Effector region element. A disordered region spans residues 183 to 202 (RPTFRLGQPTDTSSGNLCGC). Over residues 191-202 (PTDTSSGNLCGC) the composition is skewed to polar residues. 2 S-geranylgeranyl cysteine lipidation sites follow: Cys-200 and Cys-202. At Cys-202 the chain carries Cysteine methyl ester.

Belongs to the small GTPase superfamily. Rab family.

The catalysed reaction is GTP + H2O = GDP + phosphate + H(+). In terms of biological role, the small GTPases Rab are key regulators of intracellular membrane trafficking, from the formation of transport vesicles to their fusion with membranes. Rabs cycle between an inactive GDP-bound form and an active GTP-bound form that is able to recruit to membranes different sets of downstream effectors directly responsible for vesicle formation, movement, tethering and fusion. Plays a role in apical endocytosis/recycling. May be implicated in transport between the plasma membrane and early endosomes. This is Ras-related protein Rab-18 (rab-18) from Caenorhabditis briggsae.